We begin with the raw amino-acid sequence, 165 residues long: MFRSTFFGLSRAIVQPATPLTVRAAFQSRFYSAAAAASQPTTTATTTTPLQQQQQQQPTTQPTTPIQTQTGAAPTESTKPVAKPYLVGRAWTQRLPVYHLAKRGGNKKLTQIKKVQGDGQALRRDLAQFLGLEVKEVRVKVPTGHLEVDGHRREEIVKFLDGLGF.

The segment covering 42–75 (TTATTTTPLQQQQQQQPTTQPTTPIQTQTGAAPT) has biased composition (low complexity). The segment at 42 to 81 (TTATTTTPLQQQQQQQPTTQPTTPIQTQTGAAPTESTKPV) is disordered.

Belongs to the mitochondrion-specific ribosomal protein mL49 family. As to quaternary structure, component of the mitochondrial large ribosomal subunit (mt-LSU). Mature N.crassa 74S mitochondrial ribosomes consist of a small (37S) and a large (54S) subunit. The 37S small subunit contains a 16S ribosomal RNA (16S mt-rRNA) and 32 different proteins. The 54S large subunit contains a 23S rRNA (23S mt-rRNA) and 42 different proteins.

It localises to the mitochondrion. Functionally, component of the mitochondrial ribosome (mitoribosome), a dedicated translation machinery responsible for the synthesis of mitochondrial genome-encoded proteins, including at least some of the essential transmembrane subunits of the mitochondrial respiratory chain. The mitoribosomes are attached to the mitochondrial inner membrane and translation products are cotranslationally integrated into the membrane. This is Large ribosomal subunit protein mL49 (img2) from Neurospora crassa (strain ATCC 24698 / 74-OR23-1A / CBS 708.71 / DSM 1257 / FGSC 987).